The sequence spans 347 residues: METFLTHPLGPKMKERAKLDDLVVSTRIRLARNVKDTVFSPVLSKEGERQLCDRLEGRLRGLKGFEYLHMRDYDEVTRQALMEKHLISPAVAANEESAVFLSEDETISVLINEEDHLRIQTLLPGYQVKEAFELANQVDALCAESLSYAFDEQLGYLTTCPSNIGTGLRASVMLHLPGLTLTGRISPILRELRKLGYTIRGRYGEGSDAAGRLFQLSNQRTLGSHESQLLADFMEVTEQVIQAERHAREELIAHRQEELEDRFYRSYGILRYAKLLSSTEAIERLSDLHLASDLGILSDWSPPKFHELIVRLQSGFLQKHFGKTLSTQERDRERATLVRRTLDQGLV.

Positions 22–247 (LVVSTRIRLA…EQVIQAERHA (226 aa)) constitute a Phosphagen kinase C-terminal domain. ATP-binding positions include 25–29 (STRIR), H85, R118, 169–173 (RASVM), and 200–205 (RGRYGE). Positions 330–335 (RDRERA) match the RDXXRA motif of the pArg binding pocket involved in allosteric regulation motif.

Belongs to the ATP:guanido phosphotransferase family.

It carries out the reaction L-arginyl-[protein] + ATP = N(omega)-phospho-L-arginyl-[protein] + ADP + H(+). Its activity is regulated as follows. Appears to be allosterically activated by the binding of pArg-containing polypeptides to the pArg-binding pocket localized in the C-terminal domain of McsB. In terms of biological role, catalyzes the specific phosphorylation of arginine residues in proteins. This chain is Protein-arginine kinase, found in Exiguobacterium sp. (strain ATCC BAA-1283 / AT1b).